Consider the following 687-residue polypeptide: Protein 4.2 (687 aa).

A lipid anchor (N-myristoyl glycine) is attached at Gly2. A band 3 binding region spans residues 31-39 (LFVRRGQPF). Ser247 carries the phosphoserine modification.

It belongs to the transglutaminase superfamily. Transglutaminase family. Component of the ankyrin-1 complex in the erythrocyte, composed of ANK1, RHCE, RHAG, SLC4A1, EPB42, GYPA, GYPB and AQP1. Interacts with SLC4A1 (via the cytoplasmic domain); this interaction is mediated by the SLC4A1 Band 3-I dimer. Interacts with ANK1 (via ANK 1-13 repeats). Interacts with AQP1 (via the C-terminal).

The protein localises to the cell membrane. The protein resides in the cytoplasm. Its subcellular location is the cytoskeleton. Its function is as follows. Component of the ankyrin-1 complex, a multiprotein complex involved in the stability and shape of the erythrocyte membrane. This is Protein 4.2 from Bos taurus (Bovine).